Consider the following 124-residue polypeptide: Glycine cleavage system H protein (124 aa).

A Lipoyl-binding domain is found at threonine 24 to lysine 106. Position 65 is an N6-lipoyllysine (lysine 65).

Belongs to the GcvH family. As to quaternary structure, the glycine cleavage system is composed of four proteins: P, T, L and H. Requires (R)-lipoate as cofactor.

In terms of biological role, the glycine cleavage system catalyzes the degradation of glycine. The H protein shuttles the methylamine group of glycine from the P protein to the T protein. The protein is Glycine cleavage system H protein of Ruthia magnifica subsp. Calyptogena magnifica.